The following is a 1072-amino-acid chain: Error-prone DNA polymerase (1072 aa).

This sequence belongs to the DNA polymerase type-C family. DnaE2 subfamily.

It is found in the cytoplasm. The enzyme catalyses DNA(n) + a 2'-deoxyribonucleoside 5'-triphosphate = DNA(n+1) + diphosphate. In terms of biological role, DNA polymerase involved in damage-induced mutagenesis and translesion synthesis (TLS). It is not the major replicative DNA polymerase. The protein is Error-prone DNA polymerase of Burkholderia pseudomallei (strain K96243).